The sequence spans 110 residues: UPF0122 protein BPUM_1495 (110 aa).

It belongs to the UPF0122 family.

Might take part in the signal recognition particle (SRP) pathway. This is inferred from the conservation of its genetic proximity to ftsY/ffh. May be a regulatory protein. This chain is UPF0122 protein BPUM_1495, found in Bacillus pumilus (strain SAFR-032).